Consider the following 181-residue polypeptide: Der GTPase-activating protein YihI (181 aa).

Positions 1 to 73 (MSRIKKARKP…DPRIGSKKPI (73 aa)) are disordered. Residues 22-32 (NRTDRDVESRE) are compositionally biased toward basic and acidic residues. Basic residues predominate over residues 33-42 (IKRKRKRKGL). Over residues 55–67 (QARRNAQKKDPRI) the composition is skewed to basic and acidic residues.

It belongs to the YihI family. As to quaternary structure, interacts with Der.

Its function is as follows. A GTPase-activating protein (GAP) that modifies Der/EngA GTPase function. May play a role in ribosome biogenesis. The polypeptide is Der GTPase-activating protein YihI (Aliivibrio fischeri (strain ATCC 700601 / ES114) (Vibrio fischeri)).